A 369-amino-acid chain; its full sequence is Putative F-box protein At1g70960 (369 aa).

In terms of domain architecture, F-box spans 3–54; it reads NTSFETLPRHMQMEILSRVPLKFLMKFMCVSKKWASIIRGEEFREDYLFQSM.

This is Putative F-box protein At1g70960 from Arabidopsis thaliana (Mouse-ear cress).